Consider the following 106-residue polypeptide: Flagellar transcriptional regulator FlhD (106 aa).

It belongs to the FlhD family. Homodimer; disulfide-linked. Forms a heterohexamer composed of two FlhC and four FlhD subunits. Each FlhC binds a FlhD dimer, forming a heterotrimer, and a hexamer assembles by dimerization of two heterotrimers.

It is found in the cytoplasm. Functions in complex with FlhC as a master transcriptional regulator that regulates transcription of several flagellar and non-flagellar operons by binding to their promoter region. Activates expression of class 2 flagellar genes, including fliA, which is a flagellum-specific sigma factor that turns on the class 3 genes. Also regulates genes whose products function in a variety of physiological pathways. The protein is Flagellar transcriptional regulator FlhD of Burkholderia mallei (strain SAVP1).